The primary structure comprises 251 residues: B3 domain-containing protein At2g24670 (251 aa).

Residues 48 to 111 (TTPSTVMESK…SSKTREPTPG (64 aa)) form a disordered region. The segment covering 56–70 (SKSHIHDHSLRESPT) has biased composition (basic and acidic residues). Residues 153 to 249 (VSQIVELEFL…TLYFALVPLY (97 aa)) constitute a DNA-binding region (TF-B3).

The protein localises to the nucleus. This Arabidopsis thaliana (Mouse-ear cress) protein is B3 domain-containing protein At2g24670.